The chain runs to 292 residues: MTNDNLYRYLFEGVSVRGELVQLGNTYQQIIASKEYPAPVQKLLGELLVATSLLTATLKFEGSITVQLQGDGPVRLAVINGDHEQKMRGVARWEGEVPTDGTIHDVIGKGHLVITITPTKGDRYQGVVGLEGDTLAESLEGYFANSEQLKTRIILRTGEFEGNAKAAGMLLQILPDGQGQEGDFEHLEQLTETVKDEELFGLDAQDVLYRLYHQEEVKLFDPQSVEFHCGCSRERSASAICSIERIEVEKIIADEGKVSLHCDYCGTSYDFDSIDVAALHENAAKNDRDQVH.

Cystine bridges form between C229/C231 and C262/C265.

Belongs to the HSP33 family. Under oxidizing conditions two disulfide bonds are formed involving the reactive cysteines. Under reducing conditions zinc is bound to the reactive cysteines and the protein is inactive.

It localises to the cytoplasm. In terms of biological role, redox regulated molecular chaperone. Protects both thermally unfolding and oxidatively damaged proteins from irreversible aggregation. Plays an important role in the bacterial defense system toward oxidative stress. The polypeptide is 33 kDa chaperonin (Photobacterium profundum (strain SS9)).